A 169-amino-acid chain; its full sequence is Probable calcium-binding protein CML13 (169 aa).

The tract at residues 1–26 (MSTVKGQTRRERPRGARPHGLTKQKR) is disordered. Over residues 15–24 (GARPHGLTKQ) the composition is skewed to basic residues. EF-hand domains lie at 24-59 (QKRQEIKEAFDLFDTDNSGTIDAKELNVAMRALGFE), 60-95 (MTEEQINQMIADVDKDGSGSIDYEEFEHMMTAKIGE), 97-132 (DSKEELTKAFSIIDQDKNGKISDVDIQRIAKELGEN), and 133-168 (FTYQEIQEMVQEADRNGDGEIDFDEFIRMMRRTGYG). 20 residues coordinate Ca(2+): aspartate 37, aspartate 39, serine 41, threonine 43, glutamate 48, aspartate 73, aspartate 75, serine 77, serine 79, glutamate 84, aspartate 110, aspartate 112, asparagine 114, lysine 116, aspartate 121, aspartate 146, asparagine 148, aspartate 150, glutamate 152, and glutamate 157.

Functionally, potential calcium sensor. The polypeptide is Probable calcium-binding protein CML13 (CML13) (Oryza sativa subsp. japonica (Rice)).